We begin with the raw amino-acid sequence, 266 residues long: Thymidylate synthase (266 aa).

Position 24 (Arg-24) interacts with dUMP. His-54 serves as a coordination point for (6R)-5,10-methylene-5,6,7,8-tetrahydrofolate. DUMP is bound at residue 129-130 (RR). Cys-149 functions as the Nucleophile in the catalytic mechanism. Residues 169–172 (RSAD), Asn-180, and 210–212 (HIY) contribute to the dUMP site. Asp-172 contacts (6R)-5,10-methylene-5,6,7,8-tetrahydrofolate. Ala-265 contacts (6R)-5,10-methylene-5,6,7,8-tetrahydrofolate.

This sequence belongs to the thymidylate synthase family. Bacterial-type ThyA subfamily. In terms of assembly, homodimer.

Its subcellular location is the cytoplasm. It catalyses the reaction dUMP + (6R)-5,10-methylene-5,6,7,8-tetrahydrofolate = 7,8-dihydrofolate + dTMP. It functions in the pathway pyrimidine metabolism; dTTP biosynthesis. Catalyzes the reductive methylation of 2'-deoxyuridine-5'-monophosphate (dUMP) to 2'-deoxythymidine-5'-monophosphate (dTMP) while utilizing 5,10-methylenetetrahydrofolate (mTHF) as the methyl donor and reductant in the reaction, yielding dihydrofolate (DHF) as a by-product. This enzymatic reaction provides an intracellular de novo source of dTMP, an essential precursor for DNA biosynthesis. This chain is Thymidylate synthase, found in Mycolicibacterium paratuberculosis (strain ATCC BAA-968 / K-10) (Mycobacterium paratuberculosis).